Here is a 301-residue protein sequence, read N- to C-terminus: Acetylglutamate kinase (301 aa).

Substrate-binding positions include 68–69 (GG), R90, and N195.

This sequence belongs to the acetylglutamate kinase family. ArgB subfamily.

The protein resides in the cytoplasm. The catalysed reaction is N-acetyl-L-glutamate + ATP = N-acetyl-L-glutamyl 5-phosphate + ADP. The protein operates within amino-acid biosynthesis; L-arginine biosynthesis; N(2)-acetyl-L-ornithine from L-glutamate: step 2/4. Catalyzes the ATP-dependent phosphorylation of N-acetyl-L-glutamate. The chain is Acetylglutamate kinase from Pseudomonas aeruginosa (strain LESB58).